A 346-amino-acid polypeptide reads, in one-letter code: Olfactory receptor 8G5 (346 aa).

Residues 1 to 60 (MIIYKQGITFLQKENNNTIHLNTMFFLSPAETHQRMAAENHSFVTKFILVGLTEKSELQL) are Extracellular-facing. N-linked (GlcNAc...) asparagine glycans are attached at residues asparagine 16 and asparagine 40. A helical transmembrane segment spans residues 61 to 81 (PLFLVFLGIYVVTVLGNLGMI). Over 82 to 89 (TLIGLSSH) the chain is Cytoplasmic. A helical membrane pass occupies residues 90–110 (LHTPMYCFLSSLSFIDFCHST). At 111–134 (VITPKMLVNFVTEKNIISYPECMT) the chain is on the extracellular side. Cysteines 132 and 214 form a disulfide. A helical transmembrane segment spans residues 135-155 (QLYFFLVFAIAECHMLAAMAY). The Cytoplasmic portion of the chain corresponds to 156–174 (DGYVAICSPLLYSIIISNK). Residues 175–195 (ACFSLILVVYVIGLICASAHI) form a helical membrane-spanning segment. Residues 196 to 232 (GCMFRVQFCKFDVINHYFCDLISILKLSCSSTYINEL) lie on the Extracellular side of the membrane. A helical membrane pass occupies residues 233–252 (LILIFSGINILVPSLTILSS). Residues 253–272 (YIFIIASILRIRYTEGRSKA) are Cytoplasmic-facing. The chain crosses the membrane as a helical span at residues 273-293 (FSTCSSHISAVSVFFGSAAFM). The Extracellular segment spans residues 294-306 (YLQPSSVSSMDQG). A helical transmembrane segment spans residues 307–327 (KVSSVFYTIVVPMLNPLIYSL). Residues 328–346 (RNKDVHVALKKTLGKRTFL) are Cytoplasmic-facing.

This sequence belongs to the G-protein coupled receptor 1 family.

The protein resides in the cell membrane. In terms of biological role, odorant receptor. The sequence is that of Olfactory receptor 8G5 (OR8G5) from Homo sapiens (Human).